We begin with the raw amino-acid sequence, 470 residues long: 63 kDa sperm flagellar membrane protein (470 aa).

Residues 1–25 (MFCHLHCMLVVFSLLLTLTGSFVNA) form the signal peptide. Residues 41–80 (PPDPCASNPCTIASTHCVAAGESHTCECRPGYFETNGNCT) form the EGF-like 1 domain. Disulfide bonds link Cys-45–Cys-57, Cys-50–Cys-66, and Cys-68–Cys-79. Residues Asn-78, Asn-170, and Asn-219 are each glycosylated (N-linked (GlcNAc...) asparagine). Positions 81-205 (VAQQFAGSFS…STITVSDFDE (125 aa)) constitute an SEA domain. In terms of domain architecture, EGF-like 2; calcium-binding spans 202 to 250 (DFDECASADDNDCDPNANCTNTAGSFTCECDTELYDNSPNTEEPGRVCI). 6 disulfides stabilise this stretch: Cys-206/Cys-220, Cys-214/Cys-229, Cys-231/Cys-249, Cys-253/Cys-265, Cys-258/Cys-277, and Cys-279/Cys-291. An EGF-like 3 domain is found at 249 to 292 (CIAPCDPGLCTRPNEICNNGGTIEDDNLCKCIEGYDYTQYGDCD). Residue Asn-322 is glycosylated (N-linked (GlcNAc...) asparagine). The GPI-anchor amidated glycine moiety is linked to residue Gly-446. Positions 447–470 (SQRHLPVCGVLSLVVTTLLALMLH) are cleaved as a propeptide — removed in mature form.

As to expression, sperm.

It localises to the cell projection. The protein resides in the cilium. The protein localises to the flagellum membrane. This Strongylocentrotus purpuratus (Purple sea urchin) protein is 63 kDa sperm flagellar membrane protein.